The sequence spans 210 residues: Protein GrpE (210 aa).

Positions 1 to 42 (MANEERTIPETNVASERPEDPVESQTRAEGGEQIQEAAPETA) are disordered.

This sequence belongs to the GrpE family. As to quaternary structure, homodimer.

It localises to the cytoplasm. Functionally, participates actively in the response to hyperosmotic and heat shock by preventing the aggregation of stress-denatured proteins, in association with DnaK and GrpE. It is the nucleotide exchange factor for DnaK and may function as a thermosensor. Unfolded proteins bind initially to DnaJ; upon interaction with the DnaJ-bound protein, DnaK hydrolyzes its bound ATP, resulting in the formation of a stable complex. GrpE releases ADP from DnaK; ATP binding to DnaK triggers the release of the substrate protein, thus completing the reaction cycle. Several rounds of ATP-dependent interactions between DnaJ, DnaK and GrpE are required for fully efficient folding. The chain is Protein GrpE from Nitrosococcus oceani (strain ATCC 19707 / BCRC 17464 / JCM 30415 / NCIMB 11848 / C-107).